Here is a 262-residue protein sequence, read N- to C-terminus: Flap endonuclease Xni (262 aa).

Residue Asp112 participates in Mg(2+) binding. The 88-residue stretch at 171–258 folds into the 5'-3' exonuclease domain; sequence QQLNDYWAIT…GFNLKDLRYT (88 aa). Residues Ile179, Val190, and Ile193 each coordinate K(+). Residues 192-197 are interaction with DNA; that stretch reads GIGSKG.

It belongs to the Xni family. Requires Mg(2+) as cofactor. The cofactor is K(+).

Its function is as follows. Has flap endonuclease activity. During DNA replication, flap endonucleases cleave the 5'-overhanging flap structure that is generated by displacement synthesis when DNA polymerase encounters the 5'-end of a downstream Okazaki fragment. The chain is Flap endonuclease Xni from Psychromonas ingrahamii (strain DSM 17664 / CCUG 51855 / 37).